Reading from the N-terminus, the 283-residue chain is MSGRRSFFASKKPSRSSNPFDSDSDDGGREQRPARASSVPPPADQRGSLFGGGDGFSASSAAARSRYRNDFRDTGGVEAQSVQELEGYAAYKAEETTQRVQGCVRIAEEMRDTASKSLVTIHQQGQQITRTHMMTLDIDQDLSRSEKLLGDLGGIFSKKWKPKKNGEIRGPMLTRDDSFIRKGSHLEQRHKLGLSDHPPQSNARQFHSEPTSALQKVEMEKAKQDDGLSDLSNILTELKGMAVDMGTEIDRQTKALGDSEKDYDELNFRIKGANTRARRLLGK.

2 disordered regions span residues 1-64 (MSGR…AAAR) and 192-212 (LGLS…EPTS). Residues 198 to 212 (PPQSNARQFHSEPTS) are compositionally biased toward polar residues. In terms of domain architecture, t-SNARE coiled-coil homology spans 218-280 (EMEKAKQDDG…KGANTRARRL (63 aa)).

This sequence belongs to the SNAP-25 family. As to quaternary structure, interacts with SYP121. In terms of tissue distribution, expressed in roots, culms and leaves.

It is found in the membrane. T-SNARE involved in diverse vesicle trafficking and membrane fusion processes. May be involved in resistance to the rice blast fungus Magnaporthe oryzae. May contribute to host resistance to rice blast through interaction with SYP121. The polypeptide is SNAP25 homologous protein SNAP32 (Oryza sativa subsp. japonica (Rice)).